Here is a 210-residue protein sequence, read N- to C-terminus: Dof zinc finger protein DOF4.4 (210 aa).

Residues 24 to 78 (RVCPRCDSDNTKFCFYNNYSESQPRYFCKNCRRYWTHGGALRNIPVGGSCRKPKR) form a Dof-type zinc finger. Residues cysteine 26, cysteine 29, cysteine 51, and cysteine 54 each contribute to the Zn(2+) site.

Its subcellular location is the nucleus. In terms of biological role, transcription factor that binds specifically to a 5'-AA[AG]G-3' consensus core sequence. This is Dof zinc finger protein DOF4.4 (DOF4.4) from Arabidopsis thaliana (Mouse-ear cress).